A 321-amino-acid chain; its full sequence is L-carnitine dehydrogenase (321 aa).

7 to 12 (GTGVIG) lines the NAD(+) pocket.

This sequence belongs to the 3-hydroxyacyl-CoA dehydrogenase family. L-carnitine dehydrogenase subfamily. Homodimer.

It localises to the cytoplasm. The catalysed reaction is carnitine + NAD(+) = 3-dehydrocarnitine + NADH + H(+). Its pathway is amine and polyamine metabolism; carnitine metabolism. In terms of biological role, catalyzes the NAD(+)-dependent oxidation of L-carnitine to 3-dehydrocarnitine. The protein is L-carnitine dehydrogenase of Staphylococcus epidermidis (strain ATCC 12228 / FDA PCI 1200).